The following is a 210-amino-acid chain: Probable HTH-type transcriptional regulator ArpR (210 aa).

Residues 10-70 (QETRAQIIEA…ALLDSLHETH (61 aa)) enclose the HTH tetR-type domain. A DNA-binding region (H-T-H motif) is located at residues 33-52 (TLADIAELAGVTRGAIYWHF).

In terms of biological role, probable regulatory protein for the antibiotic efflux pump arpABC operon. May function as a repressor. The sequence is that of Probable HTH-type transcriptional regulator ArpR (arpR) from Pseudomonas putida (Arthrobacter siderocapsulatus).